The primary structure comprises 332 residues: MYRPRARAAPEGRVRGCAVPSTVLLLLAYLAYLALGTGVFWTLEGRAAQDSSRSFQRDKWELLQNFTCLDRPALDSLIRDVVQAYKNGASLLSNTTSMGRWELVGSFFFSVSTITTIGYGNLSPNTMAARLFCIFFALVGIPLNLVVLNRLGHLMQQGVNHWASRLGGTWQDPDKARWLAGSGALLSGLLLFLLLPPLLFSHMEGWSYTEGFYFAFITLSTVGFGDYVIGMNPSQRYPLWYKNMVSLWILFGMAWLALIIKLILSQLETPGRVCSCCHHSSKEDFKSQSWRQGPDREPESHSPQQGCYPEGPMGIIQHLEPSAHAAGCGKDS.

Over 1-20 (MYRPRARAAPEGRVRGCAVP) the chain is Cytoplasmic. The helical transmembrane segment at 21-43 (STVLLLLAYLAYLALGTGVFWTL) threads the bilayer. N-linked (GlcNAc...) asparagine glycans are attached at residues N65 and N94. The pore-forming intramembrane region spans 106 to 124 (SFFFSVSTITTIGYGNLSP). T116, I117, G118, and Y119 together coordinate K(+). The tract at residues 116 to 121 (TIGYGN) is selectivity filter 1. A helical membrane pass occupies residues 128-148 (AARLFCIFFALVGIPLNLVVL). Topologically, residues 149 to 179 (NRLGHLMQQGVNHWASRLGGTWQDPDKARWL) are cytoplasmic. A helical membrane pass occupies residues 180-200 (AGSGALLSGLLLFLLLPPLLF). An intramembrane region (pore-forming) is located at residues 211–230 (GFYFAFITLSTVGFGDYVIG). The K(+) site is built by T221, V222, G223, and F224. Residues 221-226 (TVGFGD) are selectivity filter 2. A helical membrane pass occupies residues 244-264 (MVSLWILFGMAWLALIIKLIL). At 265–332 (SQLETPGRVC…AHAAGCGKDS (68 aa)) the chain is on the cytoplasmic side. The segment at 287-312 (SQSWRQGPDREPESHSPQQGCYPEGP) is disordered.

Belongs to the two pore domain potassium channel (TC 1.A.1.8) family. As to quaternary structure, homodimer; disulfide-linked. Heterodimer with KCNK5 and KCNK16. In terms of tissue distribution, widely expressed. Highly expressed in aorta and coronary artery. Expressed in pancreas, in both endocrine (alpha, beta, gamma, delta, and epsilon) and exocrine (acinar and ductal) cells.

The protein localises to the cell membrane. It catalyses the reaction K(+)(in) = K(+)(out). The catalysed reaction is Rb(+)(in) = Rb(+)(out). The enzyme catalyses Cs(+)(in) = Cs(+)(out). With respect to regulation, inhibited by Ba(2+), quinidine, chloroform and halothane. Activated at alkaline pH. Activated by quinine and isoflurane. K(+) channel that conducts voltage-dependent outward rectifying currents upon membrane depolarization. Voltage sensing is coupled to K(+) electrochemical gradient in an 'ion flux gating' mode where outward but not inward ion flow opens the gate. Homo- and heterodimerizes to form functional channels with distinct regulatory and gating properties. Present in the cardiac conduction system where it may regulate action potential duration and beating frequency of cardiac myocytes. Permeable to other monovalent cations such as Rb(+) and Cs(+). The chain is Potassium channel subfamily K member 17 from Homo sapiens (Human).